A 203-amino-acid polypeptide reads, in one-letter code: Probable NADPH:quinone oxidoreductase 2 (203 aa).

Belongs to the SsuE family. As to quaternary structure, homotetramer. Requires FMN as cofactor.

It carries out the reaction a quinone + NADH + H(+) = a quinol + NAD(+). It catalyses the reaction a quinone + NADPH + H(+) = a quinol + NADP(+). The enzyme apparently serves as a quinone reductase in connection with conjugation reactions of hydroquinones involved in detoxification pathways. The protein is Probable NADPH:quinone oxidoreductase 2 of Oryza sativa subsp. japonica (Rice).